A 389-amino-acid polypeptide reads, in one-letter code: tRNA (guanine-N(7)-)-methyltransferase non-catalytic subunit TRM82 (389 aa).

3 WD repeats span residues 44 to 86 (QNVP…HQLK), 134 to 179 (GHTS…KGFL), and 184 to 222 (QFVS…LITE).

This sequence belongs to the WD repeat TRM82 family. As to quaternary structure, forms a heterodimer with the catalytic subunit TRM8.

The protein resides in the nucleus. The protein operates within tRNA modification; N(7)-methylguanine-tRNA biosynthesis. In terms of biological role, required for the formation of N(7)-methylguanine at position 46 (m7G46) in tRNA. In the complex, it is required to stabilize and induce conformational changes of the catalytic subunit. This Lodderomyces elongisporus (strain ATCC 11503 / CBS 2605 / JCM 1781 / NBRC 1676 / NRRL YB-4239) (Yeast) protein is tRNA (guanine-N(7)-)-methyltransferase non-catalytic subunit TRM82.